The sequence spans 275 residues: NAD kinase (275 aa).

Catalysis depends on D66, which acts as the Proton acceptor. Residues 66 to 67, 138 to 139, H168, D170, 181 to 186, and V205 contribute to the NAD(+) site; these read DG, NE, and TAYNLS.

It belongs to the NAD kinase family. Requires a divalent metal cation as cofactor.

It localises to the cytoplasm. It catalyses the reaction NAD(+) + ATP = ADP + NADP(+) + H(+). Its function is as follows. Involved in the regulation of the intracellular balance of NAD and NADP, and is a key enzyme in the biosynthesis of NADP. Catalyzes specifically the phosphorylation on 2'-hydroxyl of the adenosine moiety of NAD to yield NADP. In Halorubrum lacusprofundi (strain ATCC 49239 / DSM 5036 / JCM 8891 / ACAM 34), this protein is NAD kinase.